Reading from the N-terminus, the 465-residue chain is Innexin-11 (465 aa).

Helical transmembrane passes span 29–49, 105–125, 195–215, and 286–306; these read LMTP…QFGG, QWVP…SYLW, SGFI…NVFA, and IFVL…VSLV. The disordered stretch occupies residues 433-465; sequence ISTSLMPDKDDIESSSTSSEEDQKRVSNVITNI.

It belongs to the pannexin family.

The protein localises to the cell membrane. Its subcellular location is the cell junction. It is found in the gap junction. Its function is as follows. Structural component of the gap junctions. This is Innexin-11 (inx-11) from Caenorhabditis elegans.